We begin with the raw amino-acid sequence, 573 residues long: 2-succinyl-5-enolpyruvyl-6-hydroxy-3-cyclohexene-1-carboxylate synthase (573 aa).

This sequence belongs to the TPP enzyme family. MenD subfamily. Homodimer. It depends on Mg(2+) as a cofactor. Requires Mn(2+) as cofactor. Thiamine diphosphate serves as cofactor.

The catalysed reaction is isochorismate + 2-oxoglutarate + H(+) = 5-enolpyruvoyl-6-hydroxy-2-succinyl-cyclohex-3-ene-1-carboxylate + CO2. The protein operates within quinol/quinone metabolism; 1,4-dihydroxy-2-naphthoate biosynthesis; 1,4-dihydroxy-2-naphthoate from chorismate: step 2/7. It participates in quinol/quinone metabolism; menaquinone biosynthesis. In terms of biological role, catalyzes the thiamine diphosphate-dependent decarboxylation of 2-oxoglutarate and the subsequent addition of the resulting succinic semialdehyde-thiamine pyrophosphate anion to isochorismate to yield 2-succinyl-5-enolpyruvyl-6-hydroxy-3-cyclohexene-1-carboxylate (SEPHCHC). In Shewanella baltica (strain OS185), this protein is 2-succinyl-5-enolpyruvyl-6-hydroxy-3-cyclohexene-1-carboxylate synthase.